Reading from the N-terminus, the 151-residue chain is Small ribosomal subunit protein uS15z (151 aa).

It belongs to the universal ribosomal protein uS15 family.

The polypeptide is Small ribosomal subunit protein uS15z (Oryza sativa subsp. japonica (Rice)).